Consider the following 145-residue polypeptide: Basic phospholipase A2 PC17 (145 aa).

An N-terminal signal peptide occupies residues methionine 1–alanine 21. The propeptide occupies isoleucine 22–arginine 27. Intrachain disulfides connect cysteine 38/cysteine 98, cysteine 54/cysteine 144, cysteine 56/cysteine 72, cysteine 71/cysteine 125, cysteine 78/cysteine 118, cysteine 87/cysteine 111, and cysteine 105/cysteine 116. Ca(2+)-binding residues include tyrosine 55, glycine 57, and glycine 59. The active site involves histidine 75. Aspartate 76 lines the Ca(2+) pocket. Residue aspartate 119 is part of the active site.

This sequence belongs to the phospholipase A2 family. Group I subfamily. D49 sub-subfamily. It depends on Ca(2+) as a cofactor. Expressed by the venom gland.

The protein localises to the secreted. It catalyses the reaction a 1,2-diacyl-sn-glycero-3-phosphocholine + H2O = a 1-acyl-sn-glycero-3-phosphocholine + a fatty acid + H(+). In terms of biological role, snake venom phospholipase A2 (PLA2) that inhibits neuromuscular transmission by blocking acetylcholine release from the nerve termini. PLA2 catalyzes the calcium-dependent hydrolysis of the 2-acyl groups in 3-sn-phosphoglycerides. This chain is Basic phospholipase A2 PC17, found in Laticauda colubrina (Yellow-lipped sea krait).